A 556-amino-acid chain; its full sequence is Genetic interactor of prohibitins 3, mitochondrial (556 aa).

The transit peptide at 1 to 21 (MLNLCHALRGVRQFSCSVIVK) directs the protein to the mitochondrion. The region spanning 113-305 (ESTLNDILNY…LFDLPGYSTS (193 aa)) is the CP-type G domain.

Belongs to the TRAFAC class YlqF/YawG GTPase family. GEP3 subfamily.

Its subcellular location is the mitochondrion. Its function is as follows. Interacts genetically with prohibitins and thus may be involved in the mitochondrial lipid metabolism. This Saccharomyces cerevisiae (strain Lalvin EC1118 / Prise de mousse) (Baker's yeast) protein is Genetic interactor of prohibitins 3, mitochondrial (GEP3).